The sequence spans 337 residues: Na(+)/H(+) exchange regulatory cofactor NHE-RF2 (337 aa).

The 81-residue stretch at 11–91 (LCRLVRGEQG…QTQLLVVDKE (81 aa)) folds into the PDZ 1 domain. A disordered region spans residues 112–145 (LPPAHNPWEPKPDWACSGSLGSDTGQKDVNGPPR). A phosphoserine mark is found at Ser130, Ser183, Ser186, Ser254, Ser269, Ser280, and Ser303. The PDZ 2 domain maps to 151-231 (LCHLRRGPQG…EARLLVVDPE (81 aa)). The disordered stretch occupies residues 242–337 (VPTEEHVEGP…NRKREIFSNF (96 aa)). The span at 255–275 (PVTNGTSPAQLNGGSVCSSRS) shows a compositional bias: polar residues. A compositionally biased stretch (basic and acidic residues) spans 327–337 (WNRKREIFSNF).

As to quaternary structure, homodimer, and heterodimer with NHERF1. Binds PDZK1. Interacts with SRY. Binds ADRB2, SLC9A3, P2RY1, P2YR2, RDX and LPAR2. Interacts with MCC. Found in a complex with EZR, PODXL and NHERF2. Interacts (via the PDZ domains) with PODXL (via the C-terminal PDZ-binding motif DTHL); interaction is detected in glomerular epithelium cells. Interacts with SGK1 and KCNJ1/ROMK1. Interacts (via the PDZ domains) with SLC26A6.

Its subcellular location is the endomembrane system. It localises to the nucleus. It is found in the apical cell membrane. Its function is as follows. Scaffold protein that connects plasma membrane proteins with members of the ezrin/moesin/radixin family and thereby helps to link them to the actin cytoskeleton and to regulate their surface expression. Necessary for cAMP-mediated phosphorylation and inhibition of SLC9A3. May also act as scaffold protein in the nucleus. The polypeptide is Na(+)/H(+) exchange regulatory cofactor NHE-RF2 (Nherf2) (Mus musculus (Mouse)).